Consider the following 688-residue polypeptide: Beta-galactosidase BglY (688 aa).

Arg-118 contributes to the substrate binding site. Position 122 (Cys-122) interacts with Zn(2+). Asn-156 contributes to the substrate binding site. The Proton donor role is filled by Glu-157. 3 residues coordinate Zn(2+): Cys-162, Cys-164, and Cys-167. Catalysis depends on Glu-313, which acts as the Nucleophile. Residues Trp-321 and 361–364 (EKFH) each bind substrate.

Belongs to the glycosyl hydrolase 42 family.

The enzyme catalyses Hydrolysis of terminal non-reducing beta-D-galactose residues in beta-D-galactosides.. With respect to regulation, ca(2+), Mg(2+) and EDTA have little effect on enzyme activity at 1-10 mM. Zn(2+) at 3, 5, 7 or 10 mM inhibits activity by 20%, 30%, 40% and 65%, respectively. Functionally, hydrolyzes o-nitrophenyl-beta-D-galactopyranoside (ONPG) and p-nitrophenyl-beta-D-fucopyranoside (PNPF), but not p-nitrophenyl-beta-D-glucopyranoside (PNPG), p-nitrophenyl-beta-D-xylopyranoside (PNPX) or p-nitrophenyl-beta-D-arabinopyranoside (PNPA). Also hydrolyzes lactose, including lactose in milk. In Alicyclobacillus acidocaldarius subsp. acidocaldarius (strain ATCC 27009 / DSM 446 / BCRC 14685 / JCM 5260 / KCTC 1825 / NBRC 15652 / NCIMB 11725 / NRRL B-14509 / 104-IA) (Bacillus acidocaldarius), this protein is Beta-galactosidase BglY (bglY).